We begin with the raw amino-acid sequence, 342 residues long: L-threonine 3-dehydrogenase (342 aa).

Position 38 (C38) interacts with Zn(2+). Residues T40 and H43 each act as charge relay system in the active site. Residues H63, E64, C93, C96, C99, and C107 each contribute to the Zn(2+) site. NAD(+)-binding positions include I175, D195, R200, 262–264, and 286–287; these read LGI and IY.

It belongs to the zinc-containing alcohol dehydrogenase family. Homotetramer. Zn(2+) serves as cofactor.

The protein resides in the cytoplasm. The enzyme catalyses L-threonine + NAD(+) = (2S)-2-amino-3-oxobutanoate + NADH + H(+). It functions in the pathway amino-acid degradation; L-threonine degradation via oxydo-reductase pathway; glycine from L-threonine: step 1/2. Functionally, catalyzes the NAD(+)-dependent oxidation of L-threonine to 2-amino-3-ketobutyrate. The polypeptide is L-threonine 3-dehydrogenase (Burkholderia cenocepacia (strain ATCC BAA-245 / DSM 16553 / LMG 16656 / NCTC 13227 / J2315 / CF5610) (Burkholderia cepacia (strain J2315))).